The following is a 157-amino-acid chain: Ribosome maturation factor RimP (157 aa).

The protein belongs to the RimP family.

The protein localises to the cytoplasm. Functionally, required for maturation of 30S ribosomal subunits. The chain is Ribosome maturation factor RimP from Helicobacter hepaticus (strain ATCC 51449 / 3B1).